Reading from the N-terminus, the 173-residue chain is Shikimate kinase 2 (173 aa).

12-17 (GCGKTT) is an ATP binding site. Mg(2+)-binding residues include threonine 16 and aspartate 32. The substrate site is built by aspartate 34, arginine 58, and glycine 79. Positions 112–126 (QASPQAHQRPTLTGR) are LID domain. Arginine 120 serves as a coordination point for ATP. Arginine 139 contributes to the substrate binding site. Glutamine 155 is an ATP binding site.

In terms of assembly, monomer. Mg(2+) serves as cofactor.

It is found in the cytoplasm. The catalysed reaction is shikimate + ATP = 3-phosphoshikimate + ADP + H(+). It participates in metabolic intermediate biosynthesis; chorismate biosynthesis; chorismate from D-erythrose 4-phosphate and phosphoenolpyruvate: step 5/7. Its activity is regulated as follows. Inhibited by chloride and sulfate ions. In terms of biological role, catalyzes the specific phosphorylation of the 3-hydroxyl group of shikimic acid using ATP as a cosubstrate. The chain is Shikimate kinase 2 (aroL) from Dickeya chrysanthemi (Pectobacterium chrysanthemi).